We begin with the raw amino-acid sequence, 512 residues long: Cytokinin hydroxylase (512 aa).

Residues 2–22 form a helical membrane-spanning segment; sequence MVTLVLKYVLVIVMTLILRVL. Position 458 (cysteine 458) interacts with heme.

It belongs to the cytochrome P450 family. Heme serves as cofactor. In terms of tissue distribution, specifically expressed in roots.

Its subcellular location is the membrane. It catalyses the reaction N(6)-(dimethylallyl)adenosine 5'-phosphate + NADPH + O2 + H(+) = 9-ribosyl-trans-zeatin 5'-phosphate + NADP(+) + H2O. It carries out the reaction N(6)-(dimethylallyl)adenosine 5'-diphosphate + NADPH + O2 + H(+) = 9-ribosyl-trans-zeatin 5'-diphosphate + NADP(+) + H2O. The enzyme catalyses N(6)-(dimethylallyl)adenosine 5'-triphosphate + NADPH + O2 + H(+) = 9-ribosyl-trans-zeatin 5'-triphosphate + NADP(+) + H2O. In terms of biological role, cytokinin hydroxylase that catalyzes the biosynthesis of trans-zeatin via the isopentenyladenine riboside 5'-monophosphate (iPRMP)-dependent pathway. Can use isopentenyladenosine-5'-monophosphate, isopentenyladenosine-5'-diphosphate and isopentenyladenosine-5'-triphosphate as substrate. In Arabidopsis thaliana (Mouse-ear cress), this protein is Cytokinin hydroxylase (CYP735A2).